The chain runs to 367 residues: Protein trichome birefringence-like 39 (367 aa).

A helical; Signal-anchor for type II membrane protein transmembrane segment spans residues 7 to 29; that stretch reads GNPSFLFFFFFFLCLSTVSAYIN. Positions 120–122 match the GDS motif motif; the sequence is GDS. Positions 343–357 match the DCXHWCLPGXXDXWN motif motif; sequence DCSHWCLPGLPDTWN.

This sequence belongs to the PC-esterase family. TBL subfamily.

It is found in the membrane. Functionally, may act as a bridging protein that binds pectin and other cell wall polysaccharides. Probably involved in maintaining esterification of pectins. May be involved in the specific O-acetylation of cell wall polymers. The polypeptide is Protein trichome birefringence-like 39 (TBL39) (Arabidopsis thaliana (Mouse-ear cress)).